The chain runs to 1081 residues: MKFRDLLNDHIISHWRDKYIDYEYLKDLIDREYHNAPNSLNNSMMIDMSQSINNTIAEQYSVNDISSMVTKGGINDSPTTDIEVDETADSPAIPSPIISHSNINSNNNNNGGTNSVGFSHLHRQLNRQNSNLKNSSNSINLLKADDSNNIEKHVKSYFDQRNNNNNINNINNNNNNNSNNSNNSNNNKTIKNTRNIIADDDGGNEDTTLGSPFSSPSIGSPPMSSPSPKMLKQELHSPLLTSEKDEDEEEEGEEEEDIEMEQLELDDHDKNTTINMTANGSRGNLRKGMNQFVKTIPQNIKQLNSQISNSFLKFGGMVKGDKSNDKNNDKSNDKNNNKNNKNNNNNNNLNDEDNFDMMTSQIEKVLNNKDNMKLMESCTFTTKENFQTAFVDQVNKVDSFFVERYRKTKEKCVELCNMIPFLSTNEQLRTIRNIEFVKQGFQDNYHYLESLEAFKELNIKGFKKVLEKYEKKNRIISSECRKYLENTRIFENDSPVRFLSHRIKHLYARYFTGNDVKLASNQIKTYAEDERFQKYNLFTIGLLIGVCIVLGIQVVFNYYYYYPHEQPPIDSPLAWLLFRISLLPILLGTMFSLMSFIWEKSGINYVFIFEFKPDHKRSPGRYLKYGLIFNTLWLLALNLYIDSSSHQNTTRYLILIPIVFVLITLIIGIQPFPIMAHRTRFWVLKKIVKVVSAPWVPVRFPDFFMSVQLLSLGEFLFNIQSMVCVFNYSALDPEEVKFCSQSRFFALPVLNALPYWWRVAQCFRRYYETRQFFPHITSAIRSIFSIIALVLNYIALEYSQHDWSIIKIAWFGINVVGSFYKFYADMSVDWGFFNNYKTNPAWPLREKLVFKKKWIYYVAITLDFFLRFTWLIIFSIRKGSKHRLDNPLFLFFFSLTEVVWATQFIFFRVESEHVQSPDTYSSFQDIPIPFSQEYNNYMDEKKKRRKRKQKQSKSNNNNNNNNNNNNNNNNRLHHNDSSNNVETDETITSSNNTDSSHQKQPLTHNRHHNHNHNHQDHHDLSINDHMNPDTGDINFDSKIDYKDDEAYNLRQSSLRTSISRNASHVDLGRVSSHNDLNISRG.

One can recognise an SPX domain in the interval 1–483 (MKFRDLLNDH…RIISSECRKY (483 aa)). Disordered stretches follow at residues 86 to 118 (ETADSPAIPSPIISHSNINSNNNNNGGTNSVGF), 160 to 271 (QRNN…HDKN), and 318 to 354 (VKGDKSNDKNNDKSNDKNNNKNNKNNNNNNNLNDEDN). Composition is skewed to low complexity over residues 90–110 (SPAIPSPIISHSNINSNNNNN), 161–196 (RNNNNNINNINNNNNNNSNNSNNSNNNKTIKNTRNI), and 211–228 (SPFSSPSIGSPPMSSPSP). The segment covering 244–264 (KDEDEEEEGEEEEDIEMEQLE) has biased composition (acidic residues). Basic and acidic residues predominate over residues 319–336 (KGDKSNDKNNDKSNDKNN). The segment covering 337–349 (NKNNKNNNNNNNL) has biased composition (low complexity). The next 9 membrane-spanning stretches (helical) occupy residues 536–556 (NLFTIGLLIGVCIVLGIQVVF), 573–593 (LAWLLFRISLLPILLGTMFSL), 622–642 (YLKYGLIFNTLWLLALNLYID), 654–674 (ILIPIVFVLITLIIGIQPFPI), 703–723 (FFMSVQLLSLGEFLFNIQSMV), 776–796 (ITSAIRSIFSIIALVLNYIAL), 803–823 (WSIIKIAWFGINVVGSFYKFY), 854–874 (WIYYVAITLDFFLRFTWLIIF), and 887–907 (PLFLFFFSLTEVVWATQFIFF). In terms of domain architecture, EXS spans 738–940 (FCSQSRFFAL…SQEYNNYMDE (203 aa)). A disordered region spans residues 939 to 1031 (DEKKKRRKRK…INDHMNPDTG (93 aa)). Basic residues predominate over residues 942-951 (KKRRKRKQKQ). The span at 952–970 (SKSNNNNNNNNNNNNNNNN) shows a compositional bias: low complexity. A compositionally biased stretch (polar residues) spans 977-1003 (SSNNVETDETITSSNNTDSSHQKQPLT). Residues 1013–1022 (NHQDHHDLSI) show a composition bias toward basic and acidic residues.

Belongs to the SYG1 (TC 2.A.94) family.

It is found in the membrane. In Dictyostelium discoideum (Social amoeba), this protein is SPX and EXS domain-containing protein 4.